A 463-amino-acid chain; its full sequence is MTTETRSLYSQLPAIDRLLRDSSFLSLRDTYGHTRVVELLRQMLDEAREVIRDSQTLPAWCENWAQEVDARLTKEAQSALRPVINLTGTVLHTNLGRALQAEAAVEAVTKAMRSPVTLEYDLDDAGRGHRDRALAQLLCRITGAEDACIVNNNAAAVLLMLAATASGKEVVVSRGELVEIGGAFRIPDVMRQAGCTLHEVGTTNRTHANDYRQAVNENTALLMKVHTSNYSIQGFTKAIDEAELVALGKELDIPVVTDLGSGSLVDLSQYGLPKEPMPQELIAAGVSLVSFSGDKLLGGPQAGIIVGKKEMIARLQSHPLKRALRADKMTLAALEATLRLYLHPEALSKKLPTLRLLTRSAEVIQIQAQRLQAPLAAHYGAEFAVQVMPCLSQIGSGSLPVDRLPSAALTFTPHDGRGSHLESLAARWRELPVPVIGRIYDGRLWLDLRCLEDEQRFLEMLLK.

Lys-295 carries the N6-(pyridoxal phosphate)lysine modification.

Belongs to the SelA family. As to quaternary structure, homodecamer; pentamer of dimers. Binds only one seryl-tRNA(Sec) per dimer. The cofactor is pyridoxal 5'-phosphate.

The protein localises to the cytoplasm. The enzyme catalyses L-seryl-tRNA(Sec) + selenophosphate + H(+) = L-selenocysteinyl-tRNA(Sec) + phosphate. Its pathway is aminoacyl-tRNA biosynthesis; selenocysteinyl-tRNA(Sec) biosynthesis; selenocysteinyl-tRNA(Sec) from L-seryl-tRNA(Sec) (bacterial route): step 1/1. Functionally, converts seryl-tRNA(Sec) to selenocysteinyl-tRNA(Sec) required for selenoprotein biosynthesis. In Escherichia coli O7:K1 (strain IAI39 / ExPEC), this protein is L-seryl-tRNA(Sec) selenium transferase.